We begin with the raw amino-acid sequence, 313 residues long: Porphobilinogen deaminase 2 (313 aa).

Cys-246 carries the S-(dipyrrolylmethanemethyl)cysteine modification.

This sequence belongs to the HMBS family. In terms of assembly, monomer. It depends on dipyrromethane as a cofactor.

It carries out the reaction 4 porphobilinogen + H2O = hydroxymethylbilane + 4 NH4(+). The protein operates within porphyrin-containing compound metabolism; protoporphyrin-IX biosynthesis; coproporphyrinogen-III from 5-aminolevulinate: step 2/4. Its function is as follows. Tetrapolymerization of the monopyrrole PBG into the hydroxymethylbilane pre-uroporphyrinogen in several discrete steps. The chain is Porphobilinogen deaminase 2 (hemC2) from Streptomyces coelicolor (strain ATCC BAA-471 / A3(2) / M145).